The primary structure comprises 326 residues: ATP synthase gamma chain (326 aa).

It belongs to the ATPase gamma chain family. In terms of assembly, F-type ATPases have 2 components, CF(1) - the catalytic core - and CF(0) - the membrane proton channel. CF(1) has five subunits: alpha(3), beta(3), gamma(1), delta(1), epsilon(1). CF(0) has three main subunits: a, b and c.

Its subcellular location is the cell membrane. In terms of biological role, produces ATP from ADP in the presence of a proton gradient across the membrane. The gamma chain is believed to be important in regulating ATPase activity and the flow of protons through the CF(0) complex. This Corynebacterium efficiens (strain DSM 44549 / YS-314 / AJ 12310 / JCM 11189 / NBRC 100395) protein is ATP synthase gamma chain.